Here is a 300-residue protein sequence, read N- to C-terminus: Transcription initiation factor IIB (300 aa).

A TFIIB-type zinc finger spans residues 2–34; that stretch reads TKQKVCPVCGSTEFIYDPERGEIVCARCGYVIE. Cys7, Cys10, Cys26, and Cys29 together coordinate Zn(2+). 2 tandem repeats follow at residues 114–197 and 210–291.

The protein belongs to the TFIIB family.

Stabilizes TBP binding to an archaeal box-A promoter. Also responsible for recruiting RNA polymerase II to the pre-initiation complex (DNA-TBP-TFIIB). The sequence is that of Transcription initiation factor IIB from Pyrococcus horikoshii (strain ATCC 700860 / DSM 12428 / JCM 9974 / NBRC 100139 / OT-3).